The following is a 403-amino-acid chain: MSSLSNSLPLMEDVQGIRKAQKADGTATVMAIGTAHPPHIFPQDTYADVYFRATNSEHKVELKKKFDHICKKTMIGKRYFNYDEEFLKKYPNITSYDEPSLNDRQDICVPGVPALGTEAAVKAIEEWGRPKSEITHLVFCTSCGVDMPSADFQCAKLLGLHANVNKYCIYMQGCYAGGTVMRYAKDLAENNRGARVLVVCAELTIMMLRAPNETHLDNAIGISLFGDGAAALIIGSDPIIGVEKPMFEIVCTKQTVIPNTEDVIHLHLRETGMMFYLSKGSPMTISNNVEACLIDVFKSVGITPPEDWNSLFWIPHPGGRAILDQVEAKLKLRPEKFRAARTVLWDYGNMVSASVGYILDEMRRKSAAKGLETYGEGLEWGVLLGFGPGITVETILLHSLPLM.

A CoA-binding site is contributed by His-68. Cys-174 is an active-site residue. Cys-174 carries the cysteine sulfinic acid (-SO2H) modification. CoA-binding positions include Leu-277, Ser-281, and 318-321 (GGRA).

This sequence belongs to the thiolase-like superfamily. Chalcone/stilbene synthases family. In terms of assembly, homodimer.

It carries out the reaction 5 malonyl-CoA + 4 H(+) = 5,7-dihydroxy-2-methyl-4H-chromen-4-one + 5 CO2 + 5 CoA + H2O. It functions in the pathway secondary metabolite biosynthesis; flavonoid biosynthesis. Its function is as follows. Catalyzes the iterative condensations of 5 molecules of malonyl-CoA to produce a pentaketide 5,7-dihydroxy-2-methylchromone. This Aloe arborescens (Kidachi aloe) protein is 5,7-dihydroxy-2-methylchromone synthase.